The following is a 195-amino-acid chain: Protein LIGHT-DEPENDENT SHORT HYPOCOTYLS 7 (195 aa).

Disordered regions lie at residues Met-1–Tyr-41 and Ser-154–Ser-195. Residues Gln-21–Pro-36 are compositionally biased toward pro residues. Residues Arg-40 to Lys-167 enclose the ALOG domain. Over residues Pro-162–Met-175 the composition is skewed to basic residues. The Nuclear localization signal signature appears at Lys-165–Arg-169. The span at Thr-184–Ser-195 shows a compositional bias: low complexity.

This sequence belongs to the plant homeotic and developmental regulators ALOG protein family.

The protein resides in the nucleus. Its function is as follows. Probable transcription regulator that acts as a developmental regulator by promoting cell growth in response to light. The sequence is that of Protein LIGHT-DEPENDENT SHORT HYPOCOTYLS 7 (LSH7) from Arabidopsis thaliana (Mouse-ear cress).